The chain runs to 436 residues: GTPase Obg (436 aa).

An Obg domain is found at S2–L160. In terms of domain architecture, OBG-type G spans A161–D338. Residues G167–S174, F192–V196, D214–G217, N284–D287, and S319–L321 contribute to the GTP site. Mg(2+) is bound by residues S174 and T194. The region spanning G358 to D436 is the OCT domain.

The protein belongs to the TRAFAC class OBG-HflX-like GTPase superfamily. OBG GTPase family. Monomer. It depends on Mg(2+) as a cofactor.

It localises to the cytoplasm. In terms of biological role, an essential GTPase which binds GTP, GDP and possibly (p)ppGpp with moderate affinity, with high nucleotide exchange rates and a fairly low GTP hydrolysis rate. Plays a role in control of the cell cycle, stress response, ribosome biogenesis and in those bacteria that undergo differentiation, in morphogenesis control. This is GTPase Obg from Streptococcus pneumoniae serotype 2 (strain D39 / NCTC 7466).